The following is a 1250-amino-acid chain: DNA-directed RNA polymerase subunit beta'' (1250 aa).

Residues cysteine 224, cysteine 314, cysteine 321, and cysteine 324 each contribute to the Zn(2+) site.

It belongs to the RNA polymerase beta' chain family. RpoC2 subfamily. In terms of assembly, in plastids the minimal PEP RNA polymerase catalytic core is composed of four subunits: alpha, beta, beta', and beta''. When a (nuclear-encoded) sigma factor is associated with the core the holoenzyme is formed, which can initiate transcription. The cofactor is Zn(2+).

The protein localises to the plastid. It is found in the chloroplast. It carries out the reaction RNA(n) + a ribonucleoside 5'-triphosphate = RNA(n+1) + diphosphate. Its function is as follows. DNA-dependent RNA polymerase catalyzes the transcription of DNA into RNA using the four ribonucleoside triphosphates as substrates. In Staurastrum punctulatum (Green alga), this protein is DNA-directed RNA polymerase subunit beta''.